The primary structure comprises 139 residues: Large ribosomal subunit protein uL14A (139 aa).

This sequence belongs to the universal ribosomal protein uL14 family. Component of the large ribosomal subunit (LSU). Mature yeast ribosomes consist of a small (40S) and a large (60S) subunit. The 40S small subunit contains 1 molecule of ribosomal RNA (18S rRNA) and at least 33 different proteins. The large 60S subunit contains 3 rRNA molecules (25S, 5.8S and 5S rRNA) and at least 46 different proteins.

It localises to the cytoplasm. It is found in the nucleus. Component of the ribosome, a large ribonucleoprotein complex responsible for the synthesis of proteins in the cell. The small ribosomal subunit (SSU) binds messenger RNAs (mRNAs) and translates the encoded message by selecting cognate aminoacyl-transfer RNA (tRNA) molecules. The large subunit (LSU) contains the ribosomal catalytic site termed the peptidyl transferase center (PTC), which catalyzes the formation of peptide bonds, thereby polymerizing the amino acids delivered by tRNAs into a polypeptide chain. The nascent polypeptides leave the ribosome through a tunnel in the LSU and interact with protein factors that function in enzymatic processing, targeting, and the membrane insertion of nascent chains at the exit of the ribosomal tunnel. This is Large ribosomal subunit protein uL14A (rpl2301) from Schizosaccharomyces pombe (strain 972 / ATCC 24843) (Fission yeast).